Reading from the N-terminus, the 211-residue chain is Suppressor of RNA silencing p3 (211 aa).

The protein belongs to the tenuiviruses p3 protein family. As to quaternary structure, homodimer.

It localises to the host cytoplasm. Functionally, acts as a suppressor of RNA-mediated gene silencing, also known as post-transcriptional gene silencing (PTGS), presumably through the binding of dsRNA. This is Suppressor of RNA silencing p3 from Avena sativa (Oat).